The primary structure comprises 177 residues: ATP synthase subunit delta (177 aa).

This sequence belongs to the ATPase delta chain family. As to quaternary structure, F-type ATPases have 2 components, F(1) - the catalytic core - and F(0) - the membrane proton channel. F(1) has five subunits: alpha(3), beta(3), gamma(1), delta(1), epsilon(1). F(0) has three main subunits: a(1), b(2) and c(10-14). The alpha and beta chains form an alternating ring which encloses part of the gamma chain. F(1) is attached to F(0) by a central stalk formed by the gamma and epsilon chains, while a peripheral stalk is formed by the delta and b chains.

It is found in the cell inner membrane. Its function is as follows. F(1)F(0) ATP synthase produces ATP from ADP in the presence of a proton or sodium gradient. F-type ATPases consist of two structural domains, F(1) containing the extramembraneous catalytic core and F(0) containing the membrane proton channel, linked together by a central stalk and a peripheral stalk. During catalysis, ATP synthesis in the catalytic domain of F(1) is coupled via a rotary mechanism of the central stalk subunits to proton translocation. In terms of biological role, this protein is part of the stalk that links CF(0) to CF(1). It either transmits conformational changes from CF(0) to CF(1) or is implicated in proton conduction. The sequence is that of ATP synthase subunit delta from Erwinia tasmaniensis (strain DSM 17950 / CFBP 7177 / CIP 109463 / NCPPB 4357 / Et1/99).